The following is a 181-amino-acid chain: TATA-box-binding protein C (181 aa).

Tandem repeats lie at residues 5-83 (IANI…LGML) and 99-177 (VENV…QSKV).

It belongs to the TBP family.

Functionally, general factor that plays a role in the activation of archaeal genes transcribed by RNA polymerase. Binds specifically to the TATA box promoter element which lies close to the position of transcription initiation. This Halobacterium salinarum (strain ATCC 700922 / JCM 11081 / NRC-1) (Halobacterium halobium) protein is TATA-box-binding protein C (tbpC1).